Reading from the N-terminus, the 465-residue chain is Ribulose bisphosphate carboxylase large chain (465 aa).

At Lys4 the chain carries N6,N6,N6-trimethyllysine. Residues Asn113 and Thr163 each contribute to the substrate site. Lys165 (proton acceptor) is an active-site residue. Position 167 (Lys167) interacts with substrate. Residues Lys191, Asp193, and Glu194 each coordinate Mg(2+). Lys191 bears the N6-carboxylysine mark. The Proton acceptor role is filled by His284. Arg285, His317, and Ser369 together coordinate substrate.

This sequence belongs to the RuBisCO large chain family. Type I subfamily. In terms of assembly, heterohexadecamer of 8 large chains and 8 small chains. Mg(2+) serves as cofactor.

Its subcellular location is the plastid. The protein resides in the chloroplast. It catalyses the reaction 2 (2R)-3-phosphoglycerate + 2 H(+) = D-ribulose 1,5-bisphosphate + CO2 + H2O. The catalysed reaction is D-ribulose 1,5-bisphosphate + O2 = 2-phosphoglycolate + (2R)-3-phosphoglycerate + 2 H(+). RuBisCO catalyzes two reactions: the carboxylation of D-ribulose 1,5-bisphosphate, the primary event in carbon dioxide fixation, as well as the oxidative fragmentation of the pentose substrate in the photorespiration process. Both reactions occur simultaneously and in competition at the same active site. The sequence is that of Ribulose bisphosphate carboxylase large chain from Sarracenia flava (Yellow pitcher plant).